A 159-amino-acid chain; its full sequence is NADH-quinone oxidoreductase subunit B 2 (159 aa).

Residues C37, C38, C102, and C132 each contribute to the [4Fe-4S] cluster site.

This sequence belongs to the complex I 20 kDa subunit family. In terms of assembly, NDH-1 is composed of 14 different subunits. Subunits NuoB, C, D, E, F, and G constitute the peripheral sector of the complex. Requires [4Fe-4S] cluster as cofactor.

It localises to the cell inner membrane. It catalyses the reaction a quinone + NADH + 5 H(+)(in) = a quinol + NAD(+) + 4 H(+)(out). Functionally, NDH-1 shuttles electrons from NADH, via FMN and iron-sulfur (Fe-S) centers, to quinones in the respiratory chain. Couples the redox reaction to proton translocation (for every two electrons transferred, four hydrogen ions are translocated across the cytoplasmic membrane), and thus conserves the redox energy in a proton gradient. The chain is NADH-quinone oxidoreductase subunit B 2 from Azoarcus sp. (strain BH72).